A 407-amino-acid polypeptide reads, in one-letter code: BRCA1-A complex subunit Abraxas 1 (407 aa).

Residues 7 to 155 (LGVLSGFVLG…THCLEHALYK (149 aa)) enclose the MPN domain. The residue at position 48 (Ser-48) is a Phosphoserine. Residues 209–259 (LKEVHKINEMYAAVQEELKSICQKVEQSEREVEKLLMDVNQLKEVRRTQQA) are a coiled coil. Positions 344–407 (KRKALDTHDQ…DADYPRSPTF (64 aa)) are disordered. A compositionally biased stretch (basic and acidic residues) spans 347 to 366 (ALDTHDQGSVKRPRLLETES). 4 positions are modified to phosphoserine: Ser-384, Ser-385, Ser-394, and Ser-404. A compositionally biased stretch (acidic residues) spans 388 to 399 (IDIEMGSPEDDA). Residues 404–407 (SPTF) carry the pSXXF motif motif.

Belongs to the FAM175 family. Abraxas subfamily. Component of the ARISC complex, at least composed of UIMC1/RAP80, ABRAXAS1, BRCC3/BRCC36, BABAM2 and BABAM1/NBA1. Component of the BRCA1-A complex, at least composed of the BRCA1, BARD1, UIMC1/RAP80, ABRAXAS1, BRCC3/BRCC36, BABAM2 and BABAM1/NBA1. In the complex, interacts directly with UIMC1/RAP80, BRCC3/BRCC36 and BABAM2. Homodimer. Interacts directly (when phosphorylated at Ser-404) with BRCA1. The phosphorylated homodimer can interact directly with two BRCA1 chains, giving rise to a heterotetramer. Binds polyubiquitin. Phosphorylation of Ser-404 of the pSXXF motif by ATM or ATR constitutes a specific recognition motif for the BRCT domain of BRCA1.

The protein localises to the nucleus. In terms of biological role, involved in DNA damage response and double-strand break (DSB) repair. Component of the BRCA1-A complex, acting as a central scaffold protein that assembles the various components of the complex and mediates the recruitment of BRCA1. The BRCA1-A complex specifically recognizes 'Lys-63'-linked ubiquitinated histones H2A and H2AX at DNA lesion sites, leading to target the BRCA1-BARD1 heterodimer to sites of DNA damage at DSBs. This complex also possesses deubiquitinase activity that specifically removes 'Lys-63'-linked ubiquitin on histones H2A and H2AX. The chain is BRCA1-A complex subunit Abraxas 1 from Mus musculus (Mouse).